Here is a 1010-residue protein sequence, read N- to C-terminus: ATP-dependent DNA/RNA helicase DHX36 (1010 aa).

The segment at 1-54 is required for recruitment to cytoplasmic stress granules; it reads MSYDYHQNWGRDGGPRSSGGGYGGSYGGSHGGGHGGNRGSGGGGGGGGGRGGRG. A disordered region spans residues 1–63; the sequence is MSYDYHQNWG…GRHPGHLKGR (63 aa). The segment at 1–107 is required for the pre-miR-134 transport; the sequence is MSYDYHQNWG…IVQLLHSVQT (107 aa). Residues 1–202 are necessary for nuclear and nucleolar caps localizations; the sequence is MSYDYHQNWG…KKTDLRYIEM (202 aa). The span at 16–51 shows a compositional bias: gly residues; it reads RSSGGGYGGSYGGSHGGGHGGNRGSGGGGGGGGGRG. The interval 56-78 is DSM (DHX36-specific motif); that stretch reads HPGHLKGREIGLWYAKKQGQKNK. The interval 56–108 is required for G4-DNA- and G4-RNA-binding; it reads HPGHLKGREIGLWYAKKQGQKNKEAERQERAVVHMDERREEQIVQLLHSVQTK. 2 recA-like domain regions span residues 109–388 and 389–630; these read NDKD…MIHI and PGFT…DYQL. The Helicase ATP-binding domain occupies 219–389; that stretch reads VNMIDNHQVT…FGNCPMIHIP (171 aa). 235–240 is an ATP binding site; the sequence is GCGKTT. The tract at residues 267-319 is necessary for interaction with single-stranded DNA at the 3'-end of the G4-DNA structure; the sequence is RRISAISVAERVAAERAESCGNGNSTGYQIRLQSRLPRKQGSILYCTTGIILQ. Residues 336–339 carry the DEAH box motif; that stretch reads DEIH. The Mg(2+) site is built by Glu-337 and His-339. Residues 479–649 form the Helicase C-terminal domain; sequence ALIRYIVLEE…ELCLQIKILR (171 aa). A necessary for interaction with single-stranded DNA at the 3'-end of the G4-DNA structure region spans residues 500–559; it reads WDNISTLHDLLMSQVMFKSDKFIIIPLHSLMPTVNQTQVFKRTPPGVRKIVIATNIAETS. Positions 519–530 match the Nuclear localization signal motif; it reads DKFIIIPLHSLM. Residues Ser-559 and 604 to 607 contribute to the ATP site; that span reads RAGR. Residues 631-700 are WH domain; that stretch reads PEILRTPLEE…LGVHLARLPV (70 aa). Necessary for interaction with single-stranded DNA at the 3'-end of the G4-DNA structure stretches follow at residues 640–699, 851–862, and 872–902; these read ELCL…ARLP, NLGKKRKMVKVY, and HPKS…IYLY. Residues 843–907 form an OB-fold-like subdomains region; the sequence is PKVAKIRLNL…SIYLYDCTEV (65 aa). Residue Lys-949 is modified to N6-acetyllysine. At Ser-965 the chain carries Phosphoserine.

Found in a multi-helicase-TICAM1 complex at least composed of DHX36, DDX1, DDX21 and TICAM1; this complex exists in resting cells with or without dsRNA poly(I:C) ligand stimulation. Interacts (via C-terminus) with TICAM1 (via TIR domain). Interacts (via C-terminus) with DDX21; this interaction serves as bridges to TICAM1. Interacts with TERT; this interaction is dependent on the ability of DHX36 to bind to the G-quadruplex RNA (G4-RNA) structure present in the telomerase RNA template component (TERC). Interacts with DKC1; this interaction is dependent on the ability of DHX36 to bind to the G4-RNA structure present in TERC. Interacts with PARN; this interaction stimulates PARN to enhance uPA mRNA decay. Interacts with EXOSC3; this interaction occurs in a RNase-insensitive manner. Interacts with EXOSC10; this interaction occurs in a RNase-insensitive manner. Interacts with ILF3; this interaction occurs in a RNA-dependent manner. Interacts with ELAVL1; this interaction occurs in an RNA-dependent manner. Interacts with DDX5; this interaction occurs in a RNA-dependent manner. Interacts with DDX17; this interaction occurs in a RNA-dependent manner. Interacts with HDAC1; this interaction occurs in a RNA-dependent manner. Interacts with HDAC3; this interaction occurs in a RNA-dependent manner. Interacts with HDAC4. Interacts with AGO1. Interacts with AGO2. Interacts with ERCC6. Mg(2+) is required as a cofactor.

The protein resides in the nucleus. It is found in the cytoplasm. The protein localises to the cytosol. Its subcellular location is the stress granule. It localises to the nucleus speckle. The protein resides in the chromosome. It is found in the telomere. The protein localises to the mitochondrion. Its subcellular location is the perikaryon. It localises to the cell projection. The protein resides in the dendrite. It is found in the axon. It catalyses the reaction ATP + H2O = ADP + phosphate + H(+). With respect to regulation, ATPase activity is enhanced in the presence of homomeric poly(U) RNAs, but not by double-stranded DNA (dsDNA), double-stranded RNA (dsRNA) and tRNA. Functionally, multifunctional ATP-dependent helicase that unwinds G-quadruplex (G4) structures. Plays a role in many biological processes such as genomic integrity, gene expression regulations and as a sensor to initiate antiviral responses. G4 structures correspond to helical structures containing guanine tetrads. Binds with high affinity to and unwinds G4 structures that are formed in nucleic acids (G4-DNA and G4-RNA). Plays a role in genomic integrity. Converts the G4-RNA structure present in telomerase RNA template component (TREC) into a double-stranded RNA to promote P1 helix formation that acts as a template boundary ensuring accurate reverse transcription. Plays a role in transcriptional regulation. Resolves G4-DNA structures in promoters of genes, such as YY1, KIT/c-kit and ALPL and positively regulates their expression. Plays a role in post-transcriptional regulation. Unwinds a G4-RNA structure located in the 3'-UTR polyadenylation site of the pre-mRNA TP53 and stimulates TP53 pre-mRNA 3'-end processing in response to ultraviolet (UV)-induced DNA damage. Binds to the precursor-microRNA-134 (pre-miR-134) terminal loop and regulates its transport into the synapto-dendritic compartment. Involved in the pre-miR-134-dependent inhibition of target gene expression and the control of dendritic spine size. Plays a role in the regulation of cytoplasmic mRNA translation and mRNA stability. Binds to both G4-RNA structures and alternative non-quadruplex-forming sequence within the 3'-UTR of the PITX1 mRNA regulating negatively PITX1 protein expression. Binds to both G4-RNA structure in the 5'-UTR and AU-rich elements (AREs) localized in the 3'-UTR of NKX2-5 mRNA to either stimulate protein translation or induce mRNA decay in an ELAVL1-dependent manner, respectively. Also binds to ARE sequences present in several mRNAs mediating exosome-mediated 3'-5' mRNA degradation. Involved in cytoplasmic urokinase-type plasminogen activator (uPA) mRNA decay. Component of a multi-helicase-TICAM1 complex that acts as a cytoplasmic sensor of viral double-stranded RNA (dsRNA) and plays a role in the activation of a cascade of antiviral responses including the induction of pro-inflammatory cytokines via the adapter molecule TICAM1. Required for the early embryonic development and hematopoiesis. Involved in the regulation of cardioblast differentiation and proliferation during heart development. Involved in spermatogonia differentiation. May play a role in ossification. This chain is ATP-dependent DNA/RNA helicase DHX36, found in Bos taurus (Bovine).